A 351-amino-acid chain; its full sequence is Major capsid protein (351 aa).

It belongs to the baculoviridae p39 family.

The protein localises to the virion. This chain is Major capsid protein (P39), found in Orgyia pseudotsugata (Douglas-fir tussock moth).